Here is a 721-residue protein sequence, read N- to C-terminus: Transcription activator of gluconeogenesis ARB_05058 (721 aa).

Residues 1–34 (MSPHQTTGQESDNMTVNGENAQASSQYIQSNEEM) are compositionally biased toward polar residues. Residues 1-62 (MSPHQTTGQE…PSRPKRKKAK (62 aa)) are disordered. Positions 40–55 (TEKKASTAKAAKDPSR) are enriched in basic and acidic residues. The segment at residues 65–93 (CYACQRGHLTCGDERPCQRCIKRGFQDAC) is a DNA-binding region (zn(2)-C6 fungal-type). 5 disordered regions span residues 128 to 224 (QNNA…FNSA), 263 to 300 (GDTP…SNQA), 353 to 400 (SPAS…TPQL), 533 to 567 (NHNV…YNSS), and 635 to 666 (GLNG…QRRW). 4 stretches are compositionally biased toward polar residues: residues 133–213 (GSNT…TPSA), 267–277 (PSESGAQRGSI), 287–300 (LTGS…SNQA), and 361–379 (MMTT…GAFN). 2 stretches are compositionally biased toward low complexity: residues 380 to 399 (SRQN…STPQ) and 543 to 553 (GLMTGSTSRGS). Polar residues predominate over residues 640-661 (AASNETNELNGSLTNGATTNGR).

Belongs to the ERT1/acuK family.

It localises to the nucleus. Transcription factor which regulates nonfermentable carbon utilization. Activator of gluconeogenetic genes. The chain is Transcription activator of gluconeogenesis ARB_05058 from Arthroderma benhamiae (strain ATCC MYA-4681 / CBS 112371) (Trichophyton mentagrophytes).